The primary structure comprises 93 residues: Bombyxin B-11 (93 aa).

Residues 1 to 22 (MMKTAVMFILVVVISLTYSSEE) form the signal peptide. 3 disulfides stabilise this stretch: Cys30/Cys75, Cys42/Cys92, and Cys74/Cys79. A propeptide spans 49–64 (GGAQYAPYWQETYLRS) (bombyxin B-11 C peptide).

The protein belongs to the insulin family. As to quaternary structure, heterodimer of a B chain and an A chain linked by two disulfide bonds.

The protein resides in the secreted. Its function is as follows. Brain peptide responsible for activation of prothoracic glands to produce ecdysone in insects. In Bombyx mori (Silk moth), this protein is Bombyxin B-11 (BBXB11).